The sequence spans 419 residues: Tyrosine--tRNA ligase (419 aa).

Tyr34 lines the L-tyrosine pocket. The 'HIGH' region motif lies at 39–48 (PSGDSMHIGH). Tyr168 and Gln172 together coordinate L-tyrosine. A 'KMSKS' region motif is present at residues 230–234 (KFGKS). Lys233 is an ATP binding site. Residues 352–418 (ANLVDWLVTL…GKKKYFLVSY (67 aa)) form the S4 RNA-binding domain.

The protein belongs to the class-I aminoacyl-tRNA synthetase family. TyrS type 1 subfamily. As to quaternary structure, homodimer.

It is found in the cytoplasm. It carries out the reaction tRNA(Tyr) + L-tyrosine + ATP = L-tyrosyl-tRNA(Tyr) + AMP + diphosphate + H(+). In terms of biological role, catalyzes the attachment of tyrosine to tRNA(Tyr) in a two-step reaction: tyrosine is first activated by ATP to form Tyr-AMP and then transferred to the acceptor end of tRNA(Tyr). The protein is Tyrosine--tRNA ligase of Listeria monocytogenes serotype 4b (strain F2365).